The chain runs to 444 residues: Tubulin beta-7 chain (444 aa).

GTP-binding residues include Gln11, Glu69, Ser138, Gly142, Thr143, Gly144, Asn204, and Asn226. Glu69 is a binding site for Mg(2+).

Belongs to the tubulin family. In terms of assembly, dimer of alpha and beta chains. A typical microtubule is a hollow water-filled tube with an outer diameter of 25 nm and an inner diameter of 15 nM. Alpha-beta heterodimers associate head-to-tail to form protofilaments running lengthwise along the microtubule wall with the beta-tubulin subunit facing the microtubule plus end conferring a structural polarity. Microtubules usually have 13 protofilaments but different protofilament numbers can be found in some organisms and specialized cells. Mg(2+) serves as cofactor. Expressed in roots, leaf sheaths, and suspension cultured cells.

The protein resides in the cytoplasm. It is found in the cytoskeleton. Functionally, tubulin is the major constituent of microtubules, a cylinder consisting of laterally associated linear protofilaments composed of alpha- and beta-tubulin heterodimers. Microtubules grow by the addition of GTP-tubulin dimers to the microtubule end, where a stabilizing cap forms. Below the cap, tubulin dimers are in GDP-bound state, owing to GTPase activity of alpha-tubulin. The sequence is that of Tubulin beta-7 chain (TUBB7) from Oryza sativa subsp. japonica (Rice).